A 129-amino-acid polypeptide reads, in one-letter code: Glycine cleavage system H protein (129 aa).

In terms of domain architecture, Lipoyl-binding spans 24–106; sequence TYTVGITEHA…YADGWIFKIK (83 aa). Position 65 is an N6-lipoyllysine (K65).

The protein belongs to the GcvH family. The glycine cleavage system is composed of four proteins: P, T, L and H. It depends on (R)-lipoate as a cofactor.

The glycine cleavage system catalyzes the degradation of glycine. The H protein shuttles the methylamine group of glycine from the P protein to the T protein. The polypeptide is Glycine cleavage system H protein (Salmonella arizonae (strain ATCC BAA-731 / CDC346-86 / RSK2980)).